A 400-amino-acid polypeptide reads, in one-letter code: Acetate kinase (400 aa).

Asn10 lines the Mg(2+) pocket. Lys17 contacts ATP. A substrate-binding site is contributed by Arg91. The active-site Proton donor/acceptor is Asp150. ATP is bound by residues 210 to 214 (HLGNG), 285 to 287 (DCR), and 333 to 337 (GIGEN). Glu387 provides a ligand contact to Mg(2+).

It belongs to the acetokinase family. As to quaternary structure, homodimer. Mg(2+) serves as cofactor. Mn(2+) is required as a cofactor.

The protein localises to the cytoplasm. It carries out the reaction acetate + ATP = acetyl phosphate + ADP. It functions in the pathway metabolic intermediate biosynthesis; acetyl-CoA biosynthesis; acetyl-CoA from acetate: step 1/2. Catalyzes the formation of acetyl phosphate from acetate and ATP. Can also catalyze the reverse reaction. This is Acetate kinase from Salmonella typhi.